Consider the following 132-residue polypeptide: MVMTDPIADMLTRIRNANMVRHEKLEIPASKLKREIAEILKREGFIRDVEFIEDNKQGIIRVFLKYGQNNERVITGLKRISKPGLRVYAKSNEVPRVLNGLGIAILSTSQGVLTDKEARAKQAGGEVLAYVW.

The protein belongs to the universal ribosomal protein uS8 family. As to quaternary structure, part of the 30S ribosomal subunit. Contacts proteins S5 and S12.

In terms of biological role, one of the primary rRNA binding proteins, it binds directly to 16S rRNA central domain where it helps coordinate assembly of the platform of the 30S subunit. This chain is Small ribosomal subunit protein uS8, found in Bacillus licheniformis (strain ATCC 14580 / DSM 13 / JCM 2505 / CCUG 7422 / NBRC 12200 / NCIMB 9375 / NCTC 10341 / NRRL NRS-1264 / Gibson 46).